Reading from the N-terminus, the 495-residue chain is MQYIKIHALDNVAVALADLAEGTEVSVDNQTVTLRQDVARGHKFALTDIAKGANVIKYGLPIGYALADIAAGVHVHAHNTRTNLSDLDQYRYQPDFQDLPAQAADREVQIYRRANGDVGVRNELWILPTVGCVNGIARQIQNRFLKETNNAEGTDGVFLFSHTYGCSQLGDDHINTRTMLQNMVRHPNAGAVLVIGLGCENNQVAAFRETLGDIDPERVHFMICQQQDDEIEAGIEHLHQLYNVMRNDKREPGKLSELKFGLECGGSDGLSGITANPMLGRFSDYVIANGGTTVLTEVPEMFGAEQLLMDHCRDEATFEKLVTMVNDFKQYFIAHDQPIYENPSPGNKAGGITTLEDKSLGCTQKAGSSVVVDVLRYGERLKTPGLNLLSAPGNDAVATSALAGAGCHMVLFSTGRGTPYGGFVPTVKIATNSELAAKKKHWIDFDAGQLIHGKAMPQLLEEFIDTIVEFANGKQTCNERNDFRELAIFKSGVTL.

Belongs to the UxaA family. The cofactor is Fe(2+). It depends on Mn(2+) as a cofactor.

The catalysed reaction is D-altronate = 2-dehydro-3-deoxy-D-gluconate + H2O. The protein operates within carbohydrate metabolism; pentose and glucuronate interconversion. With respect to regulation, is inhibited by high concentrations of Fe(2+) (&gt; 2 mM), and by EDTA or other iron chelators in vitro. Catalyzes the dehydration of D-altronate. This is Altronate dehydratase (uxaA) from Escherichia coli (strain K12).